Here is a 151-residue protein sequence, read N- to C-terminus: Large ribosomal subunit protein bL9 (151 aa).

It belongs to the bacterial ribosomal protein bL9 family.

Its function is as follows. Binds to the 23S rRNA. The chain is Large ribosomal subunit protein bL9 from Prochlorococcus marinus (strain MIT 9301).